The sequence spans 500 residues: POU domain, class 3, transcription factor 3 (500 aa).

Positions 32 to 52 are enriched in gly residues; sequence GGGGGGGGGGGGAGGGGGGMQ. Disordered stretches follow at residues 32-63, 122-190, 231-319, and 461-500; these read GGGGGGGGGGGGAGGGGGGMQPGSAAVTSGAY, WSGS…WGAA, NGML…TPTS, and EKRMTPPGIQQQTPDDVYSQVGTVSADTPPPHHGLQTSVQ. Composition is skewed to pro residues over residues 134–146 and 171–181; these read QQPPQPPPPPPQG and HLGPPPPPPHQ. Residues 241–251 are compositionally biased toward gly residues; the sequence is GGGGGGAGGGA. Over residues 270 to 287 the composition is skewed to basic residues; sequence HHHHHHHHAHPHPPHPHH. Over residues 293 to 303 the composition is skewed to gly residues; sequence HHGGGGGGAGP. In terms of domain architecture, POU-specific spans 314 to 388; sequence EDTPTSDDLE…LLNKWLEEAD (75 aa). Residues 406–465 constitute a DNA-binding region (homeobox); the sequence is KRKKRTSIEVSVKGALESHFLKCPKPSAQEITNLADSLQLEKEVVRVWFCNRRQKEKRMT. Over residues 468–486 the composition is skewed to polar residues; sequence GIQQQTPDDVYSQVGTVSA.

It belongs to the POU transcription factor family. Class-3 subfamily. As to quaternary structure, homodimer. In terms of tissue distribution, brain.

The protein resides in the nucleus. Its function is as follows. Transcription factor that acts synergistically with SOX11 and SOX4. Plays a role in neuronal development. Is implicated in an enhancer activity at the embryonic met-mesencephalic junction; the enhancer element contains the octamer motif (5'-ATTTGCAT-3'). In Homo sapiens (Human), this protein is POU domain, class 3, transcription factor 3.